We begin with the raw amino-acid sequence, 1193 residues long: MTGQLVQYGRHRQRRSYARISEVLELPNLIEIQTSSYQWFLDEGLREMFQDISPIEDFTGNLSLEFIDYSLGDPKYPVAESKERDVTYSAPLRVKVRLINKETGEVKDQDVFMGDFPIMTDTGTFIINGAERVIVSQLVRSPSVYFSGKVDKNGKKGFTATVIPNRGAWLEYETDAKDVVYVRIDRTRKLPVTVLLRALGFSSDQEILDLIGENEYLRNTLEKDNTENADKALLEIYERLRPGEPPTVENAKSLLDSRFFDPKRYDLANVGRYKINKKLHIKNRLFNQKLAETLVDPETGEILAEKGQILDRRVLDKVLPYLENGIGFRKLYPNGGVVEDEVELQSIKIYAPSDQEGEQVINVIGNAYVEEAVKNITPSDIIASISYFFNLLHGVGDTDDIDHLGNRRLRSVGELLQNQFRIGLSRMERVVRERMSIQDTNTITPQQLINIRPVIASIKEFFGSSQLSQFMDQTNPLAELTHKRRLSALGPGGLTRERAGMEVRDVHYSHYGRMCPIETPEGPNIGLINSLSSFAKVNRFGFIETPYRRVDPETGKVTPRIDYLTADEEDNYVVAQANALLADDGSFIDDNIIARFRGENTVVPRNRVDYMDVSPKQVVSAATACIPFLENDDSNRALMGANMQRQAVPLMQPESPIVGTGMEYVSGKDSGAAVICRYPGVVERVEAKNIWVRRYEDVDGQQVKGNLDKYSLLKFVRSNQGTCYNQRPIVSVGDEVVKGEILADGPSMEKGELALGRNVMVGFMTWDGYNYEDAIIMSERLVKDDVYTSIHIEEYESEARDTKLGPEEITRDIPNVGEDALRNLDERGIIRIGAEVKDGDLLVGKVTPKGVTELTAEERLLHAIFGEKAREVRDTSLRVPHGGGGIIHDVKVFNREDGDELPPGVNQLVRVYIVQKRKISEGDKMAGRHGNKGVISKILPEEDMPYLPDGTPIDIMLNPLGVPSRMNIGQVLELHMGMAARYLGIHIASPVFDGAREEDVWETLEEAGMSRDAKTVLYDGRTGEPFDNRVSVGIMYMIKLAHMVDDKLHARSTGPYSLVTQQPLGGKAQFGGQRFGEMEVWALEAYGAAYTLQEILTVKSDDVVGRVKTYEAIVKGDNVPEPGVPESFKVLIKELQSLGMDVKILSGDEEEIEMRDLEDDEETKKADGLALSNDEDAADLAPVDLERDAVTKE.

Acidic residues predominate over residues 1152-1161; it reads IEMRDLEDDE. Residues 1152-1193 form a disordered region; that stretch reads IEMRDLEDDEETKKADGLALSNDEDAADLAPVDLERDAVTKE. The span at 1184–1193 shows a compositional bias: basic and acidic residues; it reads DLERDAVTKE.

Belongs to the RNA polymerase beta chain family. As to quaternary structure, the RNAP catalytic core consists of 2 alpha, 1 beta, 1 beta' and 1 omega subunit. When a sigma factor is associated with the core the holoenzyme is formed, which can initiate transcription.

It carries out the reaction RNA(n) + a ribonucleoside 5'-triphosphate = RNA(n+1) + diphosphate. Functionally, DNA-dependent RNA polymerase catalyzes the transcription of DNA into RNA using the four ribonucleoside triphosphates as substrates. The polypeptide is DNA-directed RNA polymerase subunit beta (Bacillus pumilus (strain SAFR-032)).